Consider the following 704-residue polypeptide: Protein cueball (704 aa).

An N-terminal signal peptide occupies residues Met-1–Ala-26. At Thr-27–Thr-594 the chain is on the extracellular side. LDL-receptor class B repeat units follow at residues Gly-69–Glu-119, Arg-120–Thr-166, Arg-199–Arg-242, and Asn-243–Tyr-288. 2 N-linked (GlcNAc...) asparagine glycosylation sites follow: Asn-152 and Asn-219. EGF-like domains follow at residues Thr-363 to Glu-397, Asp-432 to Glu-478, and Glu-514 to Glu-551. Intrachain disulfides connect Cys-372–Cys-385, Cys-387–Cys-396, Cys-436–Cys-446, Cys-440–Cys-465, Cys-467–Cys-477, Cys-518–Cys-528, Cys-522–Cys-539, and Cys-541–Cys-550. Asn-375 carries an N-linked (GlcNAc...) asparagine glycan. N-linked (GlcNAc...) asparagine glycosylation occurs at Asn-450. Asn-532 carries N-linked (GlcNAc...) asparagine glycosylation. Asn-592 carries N-linked (GlcNAc...) asparagine glycosylation. A helical membrane pass occupies residues Val-595–Val-615. Over Val-616–Lys-704 the chain is Cytoplasmic.

Belongs to the cueball family.

It is found in the cell membrane. Its function is as follows. Has a role in spermatogenesis and oogenesis. This is Protein cueball from Anopheles gambiae (African malaria mosquito).